Consider the following 436-residue polypeptide: Peptidase B (436 aa).

The Mn(2+) site is built by K201 and D206. K213 is an active-site residue. Mn(2+)-binding residues include D224, D283, and E285. R287 is an active-site residue.

Belongs to the peptidase M17 family. As to quaternary structure, homohexamer. Mn(2+) is required as a cofactor.

The protein localises to the cytoplasm. The catalysed reaction is Release of an N-terminal amino acid, Xaa, from a peptide or arylamide. Xaa is preferably Glu or Asp but may be other amino acids, including Leu, Met, His, Cys and Gln.. In terms of biological role, probably plays an important role in intracellular peptide degradation. This Pectobacterium atrosepticum (strain SCRI 1043 / ATCC BAA-672) (Erwinia carotovora subsp. atroseptica) protein is Peptidase B.